Reading from the N-terminus, the 973-residue chain is MSSLDKRKTQNRSKKNSYSICLKEKASAELKREELARIIFDGLYEFVGLLDAQGNVLEVNQAALNGAGVTLEEIRGKPFWKARWWQISKESVANQKRLVEAASSGEFVRCDIEILGKSGGREVIAVDFSLLPIRDEQENIVFLLAEGRNITDKKKAEAMLALKNHELEQLVERIRKLDNAKSDFFAKVSHELRTPLSLILGPLETIMEAESGRGSPYWKKFEVIQRNAMTLLKQVNTLLDLAKMDAQQMGLSYRRADLSQLTRVISSNFDGIAQQKSITLDAELPPHLIAEVDCEKYERIILNLLSNAFKFTPDGGLIRCHLSLSQPAHALITVSDSGPGIPQNLRKEIFERFHQLNQEGQQANQGTGLGLSIVKEFVELHHGTISVSDAPGGGALFQVKLPLNAPEGAYVANNAMSRSDNPQTVNPDEYLLPIPTAGSGAELPQFQSDQPRVLIVEDNPDMRCFIRDCLSTDYQVYVAPDGAKALELMCSAPPDLLITDLMMPVMSGDTLVHKVREKNEFAHIPIMVLSAKPDEKLRVKLLSESVQDYLLKPFSAHELRARVSNLISMKIAGDALRKELSDQSNDIALLTHRLIKSRHRLQQSNIALTASEARWKAVYENSAAGIVLTDTENRILNANPAFQRITGYTEKDLAQLSMEQLTPPNERTQMKQRLARLLQSGGAEYSVECSYLCKNGSTIWANASVSLMSPRVDEPQVILQIIDDITEKKQAQETLNQLQQELVQVSRSATMGEFAAYIAHEINQPLSAIMTNANAGTRWIGNEPPNIMEAKEALARIIRDSDRAADIIRMVRSFLKRQGPVLKPIDLKALVADTTLILKAPSQSNGVSLNVIAGDTLPAIMGDAVQIQQLVINLAMNSIEAMSQVGCETRQLALSFSSNASNDALIICVKDTGPGIPEDQIGQLFNAFYTTKKEGLGMGLAICLTIAEVHNGKIWAESPPAGGACFFVSIPVS.

A PAS 1 domain is found at 32–103; the sequence is REELARIIFD…NQKRLVEAAS (72 aa). The PAC 1 domain maps to 108-162; the sequence is VRCDIEILGKSGGREVIAVDFSLLPIRDEQENIVFLLAEGRNITDKKKAEAMLAL. The Histidine kinase 1 domain occupies 187-405; it reads KVSHELRTPL…LFQVKLPLNA (219 aa). A Phosphohistidine; by autocatalysis modification is found at H190. The 116-residue stretch at 452–567 folds into the Response regulatory domain; sequence RVLIVEDNPD…ELRARVSNLI (116 aa). D500 is subject to 4-aspartylphosphate. The region spanning 611–681 is the PAS 2 domain; the sequence is SEARWKAVYE…QRLARLLQSG (71 aa). In terms of domain architecture, PAC 2 spans 685 to 737; sequence YSVECSYLCKNGSTIWANASVSLMSPRVDEPQVILQIIDDITEKKQAQETLNQ. The region spanning 757–973 is the Histidine kinase 2 domain; the sequence is YIAHEINQPL…ACFFVSIPVS (217 aa). H760 is subject to Phosphohistidine.

In terms of processing, autophosphorylated. Activation requires a sequential transfer of a phosphate group from a His in the primary transmitter domain, to an Asp in the receiver domain and to a His in the secondary transmitter domain.

Its subcellular location is the cytoplasm. It catalyses the reaction ATP + protein L-histidine = ADP + protein N-phospho-L-histidine.. Its activity is regulated as follows. Activity is regulated by agonists and antagonists. Binding of agonists such as toluene or benzene to TmoS stimulates autophosphorylation. Toluene causes the most pronounced increase, followed by benzene, chlorobenzene and ethylbenzene. Activity is inhibited by antagonists such as o-xylene, o-chlorotoluene and trimethylbenzene isomers, which bind to TmoS but do not stimulate autophosphorylation. Its function is as follows. Member of the two-component regulatory system TmoS/TmoT involved in the regulation of toluene degradation. Probably phosphorylates TmoT via a four-step phosphorelay in response to toluene. Can also be induced by benzene and ethylbenzene. This chain is Sensor histidine kinase TmoS (tmoS), found in Ectopseudomonas mendocina (Pseudomonas mendocina).